A 67-amino-acid chain; its full sequence is Medusin-S1 (67 aa).

The first 22 residues, 1 to 22 (MSFLKKSLFLVLFLGFVSLSIC), serve as a signal peptide directing secretion. Positions 23–48 (EEEKRETEEKENEQEDDREERSEEKR) are excised as a propeptide. The segment at 26 to 47 (KRETEEKENEQEDDREERSEEK) is disordered. Residues 31 to 40 (EKENEQEDDR) are compositionally biased toward acidic residues. The residue at position 66 (Leu-66) is a Leucine amide.

Belongs to the frog skin active peptide (FSAP) family. Medusin subfamily. Expressed by the skin glands.

It localises to the secreted. The protein resides in the target cell membrane. Functionally, antibacterial peptide with moderate activity against the Gram-positive bacteria (S.aureus ATCC 25923, MIC=25 uM), but not against all other bacteria (both Gram-positive and Gram-negative) tested. Does not show activity against fungi, and against Leishmania species. It adopts an alpha-helical structure with very low amphipathicity in membrane environments. This Phyllomedusa sauvagei (Sauvage's leaf frog) protein is Medusin-S1.